The primary structure comprises 553 residues: MYGKSGPPPEGYVPQHPPAQGYAPHNPPPGYVHENPFQEPVPQGQEYSPQGQQYQFRKDQYYNLDHQGSGAPIGDASFEDKFPTEAGNRLKFNDWPFTIIFLLTVGAFIAVAVLTLRGWSLSPTSNGSGIYDGDNTHTLNTNAAILLLISCGVAVALSVFGLVLAGMYTKFFIYAAMILNTVVGLGTAITYLVLRHWSAGIVFMIFTILTAVCYWLMRSRIPFSVAVLRTVMSVMKKHPQTWLVSLLGTIVSAAFSVIFSVVLVATYIKYDPKSENGGCDVSGGSCSRGKLIGILVLVFFCGFYISEVIRNVIHCTIAGIYGCWYYFSKSDQGMPRWPAFGSLKRALTTSFGSICFGSLIVSLIQLLRQIIQLLRNGIISGISDSGWMQCLWLILDAVVGVFEWMAEYFNHYAYCFIALYGKPYLRAAKETWHMLREKGIDALINDNLINLALGFYTLFVGYTTALFSYLFLRFTKPDYNSGGGFNAVLMAFSFLIAIQLTHVATETIRSGTATFFVALGNDPEIFRVSYPQRFDEIFRAYPDVLNKLSHQHV.

The span at 1 to 17 (MYGKSGPPPEGYVPQHP) shows a compositional bias: pro residues. The tract at residues 1–49 (MYGKSGPPPEGYVPQHPPAQGYAPHNPPPGYVHENPFQEPVPQGQEYSP) is disordered. Topologically, residues 1–95 (MYGKSGPPPE…AGNRLKFNDW (95 aa)) are cytoplasmic. A helical transmembrane segment spans residues 96–116 (PFTIIFLLTVGAFIAVAVLTL). Residues 117 to 143 (RGWSLSPTSNGSGIYDGDNTHTLNTNA) are Extracellular-facing. Asn126 carries an N-linked (GlcNAc...) asparagine glycan. A helical transmembrane segment spans residues 144–164 (AILLLISCGVAVALSVFGLVL). At 165 to 170 (AGMYTK) the chain is on the cytoplasmic side. Residues 171 to 191 (FFIYAAMILNTVVGLGTAITY) traverse the membrane as a helical segment. Residues 192-196 (LVLRH) lie on the Extracellular side of the membrane. The chain crosses the membrane as a helical span at residues 197-217 (WSAGIVFMIFTILTAVCYWLM). Residues 218-243 (RSRIPFSVAVLRTVMSVMKKHPQTWL) are Cytoplasmic-facing. Residues 244–264 (VSLLGTIVSAAFSVIFSVVLV) traverse the membrane as a helical segment. Topologically, residues 265-288 (ATYIKYDPKSENGGCDVSGGSCSR) are extracellular. Residues 289-309 (GKLIGILVLVFFCGFYISEVI) traverse the membrane as a helical segment. At 310 to 346 (RNVIHCTIAGIYGCWYYFSKSDQGMPRWPAFGSLKRA) the chain is on the cytoplasmic side. Residues 347-367 (LTTSFGSICFGSLIVSLIQLL) form a helical membrane-spanning segment. Residues 368 to 385 (RQIIQLLRNGIISGISDS) are Extracellular-facing. A helical membrane pass occupies residues 386–406 (GWMQCLWLILDAVVGVFEWMA). At 407–450 (EYFNHYAYCFIALYGKPYLRAAKETWHMLREKGIDALINDNLIN) the chain is on the cytoplasmic side. The helical transmembrane segment at 451–471 (LALGFYTLFVGYTTALFSYLF) threads the bilayer. Topologically, residues 472–483 (LRFTKPDYNSGG) are extracellular. Residues 484-504 (GFNAVLMAFSFLIAIQLTHVA) form a helical membrane-spanning segment. At 505 to 553 (TETIRSGTATFFVALGNDPEIFRVSYPQRFDEIFRAYPDVLNKLSHQHV) the chain is on the cytoplasmic side.

It belongs to the CTL (choline transporter-like) family.

Its subcellular location is the cell membrane. Its function is as follows. Probably involved in transport through the plasma membrane. This chain is Protein PNS1 (PNS1), found in Eremothecium gossypii (strain ATCC 10895 / CBS 109.51 / FGSC 9923 / NRRL Y-1056) (Yeast).